Reading from the N-terminus, the 151-residue chain is Large ribosomal subunit protein uL13 (151 aa).

Residues 126 to 151 are disordered; it reads YPGSNHPHEAQKPEKLTIQTIPGGER. A compositionally biased stretch (basic and acidic residues) spans 131–140; that stretch reads HPHEAQKPEK.

The protein belongs to the universal ribosomal protein uL13 family. Part of the 50S ribosomal subunit.

Functionally, this protein is one of the early assembly proteins of the 50S ribosomal subunit, although it is not seen to bind rRNA by itself. It is important during the early stages of 50S assembly. The chain is Large ribosomal subunit protein uL13 from Trichodesmium erythraeum (strain IMS101).